Reading from the N-terminus, the 423-residue chain is Glucose-1-phosphate adenylyltransferase (423 aa).

Residues Y108, G173, E188–K189, and S207 each bind alpha-D-glucose 1-phosphate.

This sequence belongs to the bacterial/plant glucose-1-phosphate adenylyltransferase family. In terms of assembly, homotetramer.

It catalyses the reaction alpha-D-glucose 1-phosphate + ATP + H(+) = ADP-alpha-D-glucose + diphosphate. It functions in the pathway glycan biosynthesis; glycogen biosynthesis. Involved in the biosynthesis of ADP-glucose, a building block required for the elongation reactions to produce glycogen. Catalyzes the reaction between ATP and alpha-D-glucose 1-phosphate (G1P) to produce pyrophosphate and ADP-Glc. The protein is Glucose-1-phosphate adenylyltransferase of Francisella tularensis subsp. tularensis (strain WY96-3418).